We begin with the raw amino-acid sequence, 157 residues long: Transcription elongation factor GreA (157 aa).

It belongs to the GreA/GreB family.

Functionally, necessary for efficient RNA polymerase transcription elongation past template-encoded arresting sites. The arresting sites in DNA have the property of trapping a certain fraction of elongating RNA polymerases that pass through, resulting in locked ternary complexes. Cleavage of the nascent transcript by cleavage factors such as GreA or GreB allows the resumption of elongation from the new 3'terminus. GreA releases sequences of 2 to 3 nucleotides. This is Transcription elongation factor GreA from Hyphomonas neptunium (strain ATCC 15444).